The sequence spans 435 residues: MKDAEKREVIASSSLQRKRNRGRRLRKRRRRNEKRVLMVPSSLPNDVLEEIFLRFPVKALIRLKSLSKQWRSTIESRSFEERHLTIAKKAFVDHPKVMLVGEEDPIRGTGIRPDTDIGFRLFCLESASLLSFTRLNFPQGFFNWIYISESCDGLFCIHSPKSHSVYVVNPATRWLRLLPPAGFQILIHKFNPTEREWNVVMKSIFHLAFVKATDYKLVWLYNCDKYIVDASSPNVGVTKCEIFDFRKNAWRYLACTPSHQIFYYQKPASANGSVYWFTEPYNERIEVVAFDIQTETFRLLPKINPAIAGSDPHHIDMCTLDNSLCMSKREKDTMIQDIWRLKPSEDTWEKIFSIDLVSCPSSRTEKRDQFDWSKKDRVEPATPVAVCKNKKILLSHRYSRGLVKYDPLTKSIDFFSGHPTAYRKVIYFQSLISHL.

Residues 1-29 form a disordered region; sequence MKDAEKREVIASSSLQRKRNRGRRLRKRR. Basic residues predominate over residues 16-29; that stretch reads QRKRNRGRRLRKRR. The F-box domain maps to 37–82; that stretch reads LMVPSSLPNDVLEEIFLRFPVKALIRLKSLSKQWRSTIESRSFEER. Kelch repeat units follow at residues 164–217, 224–270, 273–317, and 322–368; these read SVYV…DYKL, DKYI…PASA, SVYW…HIDM, and NSLC…EKRD.

This chain is Putative F-box/kelch-repeat protein At1g13200, found in Arabidopsis thaliana (Mouse-ear cress).